The primary structure comprises 148 residues: uncharacterized protein (148 aa).

In terms of domain architecture, ABC transmembrane type-1 spans 25–148 (LSIGLIFSLI…YSITNIFIYN (124 aa)). The next 3 membrane-spanning stretches (helical) occupy residues 26 to 46 (SIGL…PLII), 60 to 80 (IVII…STYI), and 127 to 147 (ITRV…IFIY).

The protein localises to the cell membrane. This is an uncharacterized protein from Staphylococcus epidermidis.